Reading from the N-terminus, the 96-residue chain is MIGNQPNVNNLDVNLEELVLPVSLLADEELSPDGDPEEEEHYPYTIDTCCKPCGAGVRFTIIATPSAVITLRQLLLQEVFLTCLRCSRSLFRHGRS.

The interval 1 to 42 is E7 terminal domain; the sequence is MIGNQPNVNNLDVNLEELVLPVSLLADEELSPDGDPEEEEHY. A zinc finger spans residues 50–86; it reads CKPCGAGVRFTIIATPSAVITLRQLLLQEVFLTCLRC. Residues 68–76 carry the Nuclear export signal motif; it reads VITLRQLLL.

This sequence belongs to the papillomaviridae E7 protein family. As to quaternary structure, homodimer. Homooligomer. Interacts with host RB1; this interaction induces dissociation of RB1-E2F1 complex thereby disrupting RB1 activity. Interacts with host EP300; this interaction represses EP300 transcriptional activity. Interacts with protein E2; this interaction inhibits E7 oncogenic activity. Interacts with host TMEM173/STING; this interaction impairs the ability of TMEM173/STING to sense cytosolic DNA and promote the production of type I interferon (IFN-alpha and IFN-beta). Highly phosphorylated.

The protein localises to the host cytoplasm. It is found in the host nucleus. Functionally, plays a role in viral genome replication by driving entry of quiescent cells into the cell cycle. Stimulation of progression from G1 to S phase allows the virus to efficiently use the cellular DNA replicating machinery to achieve viral genome replication. E7 protein has both transforming and trans-activating activities. Induces the disassembly of the E2F1 transcription factor from RB1, with subsequent transcriptional activation of E2F1-regulated S-phase genes. Interferes with host histone deacetylation mediated by HDAC1 and HDAC2, leading to transcription activation. Also plays a role in the inhibition of both antiviral and antiproliferative functions of host interferon alpha. Interaction with host TMEM173/STING impairs the ability of TMEM173/STING to sense cytosolic DNA and promote the production of type I interferon (IFN-alpha and IFN-beta). The sequence is that of Protein E7 from Homo sapiens (Human).